A 161-amino-acid chain; its full sequence is Regulator of ribonuclease activity A (161 aa).

It belongs to the RraA family. As to quaternary structure, homotrimer. Binds to both RNA-binding sites in the C-terminal region of Rne and to RhlB.

Its subcellular location is the cytoplasm. Its function is as follows. Globally modulates RNA abundance by binding to RNase E (Rne) and regulating its endonucleolytic activity. Can modulate Rne action in a substrate-dependent manner by altering the composition of the degradosome. Modulates RNA-binding and helicase activities of the degradosome. This chain is Regulator of ribonuclease activity A, found in Alteromonas mediterranea (strain DSM 17117 / CIP 110805 / LMG 28347 / Deep ecotype).